The sequence spans 257 residues: Acetylglutamate kinase (257 aa).

Residues 43-44, R65, and N157 each bind substrate; that span reads GG. ATP is bound by residues 180-185 and 208-210; these read DVSGIL and IIT.

It belongs to the acetylglutamate kinase family. ArgB subfamily. Homodimer.

It localises to the cytoplasm. It catalyses the reaction N-acetyl-L-glutamate + ATP = N-acetyl-L-glutamyl 5-phosphate + ADP. Its pathway is amino-acid biosynthesis; L-arginine biosynthesis; N(2)-acetyl-L-ornithine from L-glutamate: step 2/4. In terms of biological role, catalyzes the ATP-dependent phosphorylation of N-acetyl-L-glutamate. This chain is Acetylglutamate kinase, found in Salmonella paratyphi A (strain AKU_12601).